The primary structure comprises 102 residues: MERYDKATLNAAFAPEFRQNEGSLTSTLRTLLFFTALMITLPVGLYFSSKAYIFEGTLGMSNRDSYFYAAIVAVVTVHVVLAMFVYVAWSEGTRQWREGKQD.

The Cytoplasmic portion of the chain corresponds to 1–30 (MERYDKATLNAAFAPEFRQNEGSLTSTLRT). Residues 31–51 (LLFFTALMITLPVGLYFSSKA) form a helical membrane-spanning segment. At 52 to 66 (YIFEGTLGMSNRDSY) the chain is on the lumenal side. The chain crosses the membrane as a helical span at residues 67–87 (FYAAIVAVVTVHVVLAMFVYV). Residues 88-102 (AWSEGTRQWREGKQD) are Cytoplasmic-facing.

It belongs to the VMA21 family. Associates with the V0 complex of the vacuolar ATPase (V-ATPase). Interacts with ATP6AP2.

Its subcellular location is the endoplasmic reticulum membrane. It localises to the endoplasmic reticulum-Golgi intermediate compartment membrane. The protein resides in the cytoplasmic vesicle. It is found in the COPII-coated vesicle membrane. Functionally, required for the assembly of the V0 complex of the vacuolar ATPase (V-ATPase) in the endoplasmic reticulum. In Gallus gallus (Chicken), this protein is Vacuolar ATPase assembly integral membrane protein VMA21.